Here is a 165-residue protein sequence, read N- to C-terminus: Phosphopantetheine adenylyltransferase (165 aa).

Residue Thr9 participates in substrate binding. ATP contacts are provided by residues 9–10 (TF) and His17. Substrate is bound by residues Lys41, Leu73, and Arg87. Residues 88–90 (GLR), Glu98, and 123–129 (YMFISAT) contribute to the ATP site.

Belongs to the bacterial CoaD family. In terms of assembly, homohexamer. Requires Mg(2+) as cofactor.

It is found in the cytoplasm. The enzyme catalyses (R)-4'-phosphopantetheine + ATP + H(+) = 3'-dephospho-CoA + diphosphate. It participates in cofactor biosynthesis; coenzyme A biosynthesis; CoA from (R)-pantothenate: step 4/5. Reversibly transfers an adenylyl group from ATP to 4'-phosphopantetheine, yielding dephospho-CoA (dPCoA) and pyrophosphate. The polypeptide is Phosphopantetheine adenylyltransferase (Nitrosospira multiformis (strain ATCC 25196 / NCIMB 11849 / C 71)).